Here is a 116-residue protein sequence, read N- to C-terminus: uncharacterized protein (116 aa).

A helical transmembrane segment spans residues 22–42 (LIFLVVNLKVPAVGLELFLLV).

The protein resides in the membrane. This is an uncharacterized protein from Saccharomyces cerevisiae (strain ATCC 204508 / S288c) (Baker's yeast).